The chain runs to 135 residues: Large ribosomal subunit protein uL16c (135 aa).

Belongs to the universal ribosomal protein uL16 family. In terms of assembly, part of the 50S ribosomal subunit.

The protein resides in the plastid. It is found in the chloroplast. This chain is Large ribosomal subunit protein uL16c, found in Aethionema cordifolium (Lebanon stonecress).